The chain runs to 157 residues: Transcriptional repressor NrdR (157 aa).

The segment at 3-34 (CPFCNTVDTKVIDSRLVSEGSQIKRRRQCAIC) is a zinc-finger region. The 91-residue stretch at 49–139 (PRVIKNDDLL…VYRSFEDVRE (91 aa)) folds into the ATP-cone domain.

The protein belongs to the NrdR family. Requires Zn(2+) as cofactor.

Its function is as follows. Negatively regulates transcription of bacterial ribonucleotide reductase nrd genes and operons by binding to NrdR-boxes. The sequence is that of Transcriptional repressor NrdR from Hamiltonella defensa subsp. Acyrthosiphon pisum (strain 5AT).